The primary structure comprises 315 residues: Protein LST8 homolog (315 aa).

WD repeat units lie at residues 1 to 31 (MGDQ…KTMR), 33 to 71 (VETS…TAPV), 76 to 115 (GVQK…PHCS), 119 to 158 (DCES…HECI), 161 to 200 (EVDA…DQKM), 211 to 250 (AHTR…KWRE), 253 to 292 (IENY…PTRE), and 295 to 315 (GHTK…KVNH).

It belongs to the WD repeat LST8 family.

The protein resides in the cytoplasm. The polypeptide is Protein LST8 homolog (Drosophila pseudoobscura pseudoobscura (Fruit fly)).